The primary structure comprises 767 residues: Photosystem I P700 chlorophyll a apoprotein A1 (767 aa).

The next 8 membrane-spanning stretches (helical) occupy residues 72-95, 158-181, 197-221, 305-323, 364-387, 403-429, 451-473, and 548-566; these read IFSA…FHGA, LMSL…FHYH, LNHH…HVSL, IAHH…GHMY, WHAQ…QHMY, IGLF…IAMI, ALIS…LYIH, and FMVH…LILL. [4Fe-4S] cluster is bound by residues Cys-590 and Cys-599. A run of 2 helical transmembrane segments spans residues 606 to 627 and 681 to 703; these read HVFL…HFSW and TSAY…MFLF. Residue His-692 coordinates chlorophyll a'. Residues Met-700 and Tyr-708 each coordinate chlorophyll a. Phylloquinone is bound at residue Trp-709. Residues 741-761 traverse the membrane as a helical segment; the sequence is AVGVAHYLLGGIATTWAFFHA.

The protein belongs to the PsaA/PsaB family. In terms of assembly, the PsaA/B heterodimer binds the P700 chlorophyll special pair and subsequent electron acceptors. PSI consists of a core antenna complex that captures photons, and an electron transfer chain that converts photonic excitation into a charge separation. The cyanobacterial PSI reaction center is composed of one copy each of PsaA,B,C,D,E,F,I,J,K,L,M and X, and forms trimeric complexes. Requires PSI electron transfer chain: 5 chlorophyll a, 1 chlorophyll a', 2 phylloquinones and 3 4Fe-4S clusters. PSI core antenna: 90 chlorophyll a, 22 carotenoids, 3 phospholipids and 1 galactolipid. P700 is a chlorophyll a/chlorophyll a' dimer, A0 is one or more chlorophyll a, A1 is one or both phylloquinones and FX is a shared 4Fe-4S iron-sulfur center. as cofactor.

Its subcellular location is the cellular thylakoid membrane. It carries out the reaction reduced [plastocyanin] + hnu + oxidized [2Fe-2S]-[ferredoxin] = oxidized [plastocyanin] + reduced [2Fe-2S]-[ferredoxin]. PsaA and PsaB bind P700, the primary electron donor of photosystem I (PSI), as well as the electron acceptors A0, A1 and FX. PSI is a plastocyanin/cytochrome c6-ferredoxin oxidoreductase, converting photonic excitation into a charge separation, which transfers an electron from the donor P700 chlorophyll pair to the spectroscopically characterized acceptors A0, A1, FX, FA and FB in turn. Oxidized P700 is reduced on the lumenal side of the thylakoid membrane by plastocyanin or cytochrome c6. The polypeptide is Photosystem I P700 chlorophyll a apoprotein A1 (Synechococcus sp. (strain WH7803)).